A 354-amino-acid polypeptide reads, in one-letter code: NADH-quinone oxidoreductase subunit H (354 aa).

8 helical membrane-spanning segments follow: residues 25-45 (LVRILVVAVVILLCVAYLILW), 91-111 (WIYMVAPIMVVVPAFAVWAVI), 126-146 (LLYAMAVSSIGVYGVILAGWA), 170-190 (MGFALVVVLMTAGTLNLSGIV), 205-225 (FLSWNWLPLLPMFVVYFISGI), 267-287 (IVISALAATLFLGGWSAPFGF), 290-310 (FIPGIVWLVAKVFFLLSVFIW), and 330-350 (IFIPVCVVWLVVVGFWIMSPL).

This sequence belongs to the complex I subunit 1 family. NDH-1 is composed of 14 different subunits. Subunits NuoA, H, J, K, L, M, N constitute the membrane sector of the complex.

Its subcellular location is the cell inner membrane. The enzyme catalyses a quinone + NADH + 5 H(+)(in) = a quinol + NAD(+) + 4 H(+)(out). In terms of biological role, NDH-1 shuttles electrons from NADH, via FMN and iron-sulfur (Fe-S) centers, to quinones in the respiratory chain. The immediate electron acceptor for the enzyme in this species is believed to be ubiquinone. Couples the redox reaction to proton translocation (for every two electrons transferred, four hydrogen ions are translocated across the cytoplasmic membrane), and thus conserves the redox energy in a proton gradient. This subunit may bind ubiquinone. In Paraburkholderia xenovorans (strain LB400), this protein is NADH-quinone oxidoreductase subunit H.